Here is a 550-residue protein sequence, read N- to C-terminus: Zinc finger protein 426 (550 aa).

In terms of domain architecture, KRAB spans 39 to 110; that stretch reads VSFEDVIVDF…KIVFPEWKLQ (72 aa). C2H2-type zinc fingers lie at residues 219–241, 274–296, 302–324, 330–352, 358–380, 386–408, 414–436, 442–464, 470–492, 498–522, and 528–550; these read FECS…QRTH, HRCK…MRTH, YECK…GRTH, YVCS…VRSH, YGCK…IRTH, FVCV…LKLH, CECK…MRTH, YTCK…MRIH, YECK…ERTH, YECK…SHTH, and YKCQ…ERIH.

The protein localises to the nucleus. May be involved in transcriptional regulation. In Mus musculus (Mouse), this protein is Zinc finger protein 426 (Znf426).